Reading from the N-terminus, the 328-residue chain is GMP reductase (328 aa).

The active-site Thioimidate intermediate is cysteine 176. Residue 205–228 (IIADGGIRTHGDIAKSIRFGASMI) participates in NADP(+) binding.

Belongs to the IMPDH/GMPR family. GuaC type 2 subfamily.

It carries out the reaction IMP + NH4(+) + NADP(+) = GMP + NADPH + 2 H(+). Its function is as follows. Catalyzes the irreversible NADPH-dependent deamination of GMP to IMP. It functions in the conversion of nucleobase, nucleoside and nucleotide derivatives of G to A nucleotides, and in maintaining the intracellular balance of A and G nucleotides. This is GMP reductase from Streptococcus pneumoniae (strain P1031).